A 1198-amino-acid chain; its full sequence is Structural polyprotein (1198 aa).

The interval 2 to 15 (TKKPGGPGKNRAIN) is interaction with host EXOC1. Positions 37–72 (LLDGRGPVRFVLALITFFKFTALAPTKALLGRWKAV) are hydrophobic; homodimerization of capsid protein C. The propeptide at 106 to 127 (GGNEGSIMWLASLAVVIACAGA) is ER anchor for the capsid protein C, removed in mature form by serine protease NS3. The chain crosses the membrane as a helical span at residues 110 to 130 (GSIMWLASLAVVIACAGAMKL). Asn142 carries N-linked (GlcNAc...) asparagine; by host glycosylation. A run of 2 helical transmembrane segments spans residues 254–274 (WIIRNPGYAFLAAVLGWMLGS) and 280–294 (VVFTILLLLVAPAYS). Intrachain disulfides connect Cys297–Cys324, Cys354–Cys410, Cys354–Cys415, Cys368–Cys399, Cys386–Cys410, and Cys386–Cys415. A fusion peptide region spans residues 392–405 (DRGWGNGCGLFGKG). Asn448 is a glycosylation site (N-linked (GlcNAc...) asparagine; by host). 2 disulfide bridges follow: Cys484–Cys581 and Cys598–Cys629. 2 helical membrane-spanning segments follow: residues 747–767 (FGGMSWITQGLMGALLLWMGV) and 774–794 (IALAFLATGGVLVFLATNVHA). Cystine bridges form between Cys798/Cys809, Cys849/Cys937, Cys973/Cys1017, Cys1074/Cys1123, Cys1085/Cys1106, and Cys1107/Cys1110. Asn924 and Asn1001 each carry an N-linked (GlcNAc...) asparagine; by host glycan. The disordered stretch occupies residues 1151 to 1177 (MVDPFSAGPSGDVSGHPGSPSQEVDGQ).

As to quaternary structure, homodimer. Interacts (via N-terminus) with host EXOC1 (via C-terminus); this interaction results in EXOC1 degradation through the proteasome degradation pathway. Interacts with host CAPRIN1; this interaction is involved in the suppression of the integrated stress response. Forms heterodimers with envelope protein E in the endoplasmic reticulum and Golgi. In terms of assembly, homodimer; in the endoplasmic reticulum and Golgi. Interacts with protein prM. Interacts with non-structural protein 1. Genome polyprotein: Specific enzymatic cleavages in vivo yield mature proteins. Cleavages in the lumen of endoplasmic reticulum are performed by host signal peptidase, whereas cleavages in the cytoplasmic side are performed by serine protease NS3. Signal cleavage at the 2K-4B site requires a prior NS3 protease-mediated cleavage at the 4A-2K site. Post-translationally, cleaved in post-Golgi vesicles by a host furin, releasing the mature small envelope protein M, and peptide pr. This cleavage is incomplete as up to 30% of viral particles still carry uncleaved prM. In terms of processing, N-glycosylated.

The protein resides in the secreted. It localises to the virion membrane. It is found in the host endoplasmic reticulum membrane. Functionally, plays a role in virus budding by binding to the cell membrane and gathering the viral RNA into a nucleocapsid that forms the core of a mature virus particle. During virus entry, may induce genome penetration into the host cytoplasm after hemifusion induced by the surface proteins. Can migrate to the cell nucleus where it modulates host functions. Overcomes the anti-viral effects of host EXOC1 by sequestering and degrading the latter through the proteasome degradation pathway. Inhibits the integrated stress response (ISR) in the infected cell by binding to host CAPRIN1. Inhibits RNA silencing by interfering with host Dicer. In terms of biological role, prevents premature fusion activity of envelope proteins in trans-Golgi by binding to envelope protein E at pH6.0. After virion release in extracellular space, gets dissociated from E dimers. Its function is as follows. Acts as a chaperone for envelope protein E during intracellular virion assembly by masking and inactivating envelope protein E fusion peptide. prM is the only viral peptide matured by host furin in the trans-Golgi network probably to avoid catastrophic activation of the viral fusion activity in acidic Golgi compartment prior to virion release. prM-E cleavage is inefficient, and many virions are only partially matured. These uncleaved prM would play a role in immune evasion. Functionally, may play a role in virus budding. Exerts cytotoxic effects by activating a mitochondrial apoptotic pathway through M ectodomain. May display a viroporin activity. Binds to host cell surface receptor and mediates fusion between viral and cellular membranes. Envelope protein is synthesized in the endoplasmic reticulum in the form of heterodimer with protein prM. They play a role in virion budding in the ER, and the newly formed immature particle is covered with 60 spikes composed of heterodimer between precursor prM and envelope protein E. The virion is transported to the Golgi apparatus where the low pH causes dissociation of PrM-E heterodimers and formation of E homodimers. prM-E cleavage is inefficient, and many virions are only partially matured. These uncleaved prM would play a role in immune evasion. In terms of biological role, may play a role in neuroinvasiveness. In Ardeidae (herons), this protein is Structural polyprotein.